Consider the following 648-residue polypeptide: Rab11 family-interacting protein 1 (648 aa).

The region spanning 1–129 (MSLAASAGRG…DQSRRKKQWY (129 aa)) is the C2 domain. The segment covering 164–188 (SMKDKSRNPFGKLKDKIKGKNKDNT) has biased composition (basic and acidic residues). 3 disordered regions span residues 164 to 470 (SMKD…GRKG), 483 to 503 (VRRPEKDAVPVASQWGSSQNP), and 516 to 555 (VESKCEPKPPVPVPRTPQTRAVKPRPHPVKPMNTTAPKIT). The span at 189–201 (SDTASAIVPSTTP) shows a compositional bias: polar residues. Residues Ser205, Ser209, and Ser237 each carry the phosphoserine modification. 2 stretches are compositionally biased toward polar residues: residues 227–242 (PSLQKTPLSQSMSVLP) and 271–296 (SSASEVMSQKRTSSTDHTQPNQSNFS). A phosphoserine mark is found at Ser304, Ser319, Ser343, Ser345, Ser347, Ser349, Ser360, Ser361, and Ser386. The span at 314–323 (DSLSRSNVCI) shows a compositional bias: polar residues. 2 stretches are compositionally biased toward basic and acidic residues: residues 381–394 (SDRRLSDSSTKDSM) and 422–436 (ATKETKDSKKQESKK). Ser438 bears the Phosphoserine mark. The span at 445–454 (GKKDVAKGSE) shows a compositional bias: basic and acidic residues. The FIP-RBD domain occupies 576-638 (KKYQPSDPAF…EETPNILRVP (63 aa)). The segment at 584-648 (AFAYAQLTHD…AQTGKKAGKM (65 aa)) is necessary for interaction with RAB4A and RAB11A, subcellular location and endosomal recycling.

As to quaternary structure, homooligomer. Interacts with RAB11A, RAB11B, RAB25, RAB4A and RAB14.

It is found in the recycling endosome. The protein resides in the cytoplasmic vesicle. Its function is as follows. A Rab11 effector protein involved in the endosomal recycling process. Also involved in controlling membrane trafficking along the phagocytic pathway and in phagocytosis. Interaction with RAB14 may function in the process of neurite formation. This chain is Rab11 family-interacting protein 1, found in Rattus norvegicus (Rat).